The following is a 220-amino-acid chain: Urease accessory protein UreE (220 aa).

The interval 145–220 is disordered; it reads EGGAYSAGGH…QIHKRRPDNL (76 aa). Basic and acidic residues predominate over residues 156–177; it reads HGHDHGSHEHSAHDHGKHDHAP. Positions 178-188 are enriched in low complexity; that stretch reads AKPATAATPAA. Basic and acidic residues predominate over residues 191–206; sequence HGPDCNHGHDHAHEAK.

Belongs to the UreE family.

It is found in the cytoplasm. Involved in urease metallocenter assembly. Binds nickel. Probably functions as a nickel donor during metallocenter assembly. In Polaromonas sp. (strain JS666 / ATCC BAA-500), this protein is Urease accessory protein UreE.